The chain runs to 231 residues: Nitrate reductase [NAD(P)H] (231 aa).

The FAD-binding FR-type domain maps to 1 to 85 (PQKLGLPVGR…KGPHRHIEYT (85 aa)). Residues 25-28 (RAYT), 42-46 (LIKIY), phenylalanine 47, 59-61 (LMS), and threonine 112 contribute to the FAD site.

The protein belongs to the nitrate reductase family. In terms of assembly, homodimer. The cofactor is FAD. Requires heme as cofactor. Mo-molybdopterin is required as a cofactor.

The catalysed reaction is nitrite + NAD(+) + H2O = nitrate + NADH + H(+). It carries out the reaction nitrite + NADP(+) + H2O = nitrate + NADPH + H(+). Functionally, nitrate reductase is a key enzyme involved in the first step of nitrate assimilation in plants, fungi and bacteria. This Zea mays (Maize) protein is Nitrate reductase [NAD(P)H] (NAR).